A 177-amino-acid chain; its full sequence is ATP synthase subunit delta (177 aa).

Belongs to the ATPase delta chain family. As to quaternary structure, F-type ATPases have 2 components, F(1) - the catalytic core - and F(0) - the membrane proton channel. F(1) has five subunits: alpha(3), beta(3), gamma(1), delta(1), epsilon(1). F(0) has three main subunits: a(1), b(2) and c(10-14). The alpha and beta chains form an alternating ring which encloses part of the gamma chain. F(1) is attached to F(0) by a central stalk formed by the gamma and epsilon chains, while a peripheral stalk is formed by the delta and b chains.

It localises to the cell inner membrane. F(1)F(0) ATP synthase produces ATP from ADP in the presence of a proton or sodium gradient. F-type ATPases consist of two structural domains, F(1) containing the extramembraneous catalytic core and F(0) containing the membrane proton channel, linked together by a central stalk and a peripheral stalk. During catalysis, ATP synthesis in the catalytic domain of F(1) is coupled via a rotary mechanism of the central stalk subunits to proton translocation. Its function is as follows. This protein is part of the stalk that links CF(0) to CF(1). It either transmits conformational changes from CF(0) to CF(1) or is implicated in proton conduction. This chain is ATP synthase subunit delta, found in Escherichia coli O81 (strain ED1a).